We begin with the raw amino-acid sequence, 115 residues long: Large ribosomal subunit protein bL19 (115 aa).

The protein belongs to the bacterial ribosomal protein bL19 family.

Functionally, this protein is located at the 30S-50S ribosomal subunit interface and may play a role in the structure and function of the aminoacyl-tRNA binding site. The protein is Large ribosomal subunit protein bL19 of Desulforamulus reducens (strain ATCC BAA-1160 / DSM 100696 / MI-1) (Desulfotomaculum reducens).